The following is a 64-amino-acid chain: Large ribosomal subunit protein bL35 (64 aa).

Over residues 1-15 (MPKNKTHSGASKRFR) the composition is skewed to basic residues. Positions 1-20 (MPKNKTHSGASKRFRVTGSG) are disordered.

The protein belongs to the bacterial ribosomal protein bL35 family.

In Nocardioides sp. (strain ATCC BAA-499 / JS614), this protein is Large ribosomal subunit protein bL35.